The sequence spans 184 residues: NADH-quinone oxidoreductase subunit B (184 aa).

[4Fe-4S] cluster is bound by residues Cys-63, Cys-64, Cys-128, and Cys-158.

It belongs to the complex I 20 kDa subunit family. As to quaternary structure, NDH-1 is composed of 14 different subunits. Subunits NuoB, C, D, E, F, and G constitute the peripheral sector of the complex. [4Fe-4S] cluster is required as a cofactor.

The protein resides in the cell inner membrane. The enzyme catalyses a quinone + NADH + 5 H(+)(in) = a quinol + NAD(+) + 4 H(+)(out). Its function is as follows. NDH-1 shuttles electrons from NADH, via FMN and iron-sulfur (Fe-S) centers, to quinones in the respiratory chain. The immediate electron acceptor for the enzyme in this species is believed to be ubiquinone. Couples the redox reaction to proton translocation (for every two electrons transferred, four hydrogen ions are translocated across the cytoplasmic membrane), and thus conserves the redox energy in a proton gradient. The sequence is that of NADH-quinone oxidoreductase subunit B from Xanthomonas oryzae pv. oryzae (strain MAFF 311018).